Reading from the N-terminus, the 296-residue chain is NADH-ubiquinone oxidoreductase chain 2 (296 aa).

A run of 8 helical transmembrane segments spans residues 5–25 (LCLFFSYILMVSSHSWLGLWL), 49–69 (YFLIQSVASVIFLASILNQSF), 71–91 (FLIPFALLIKIGAAPFHMWLV), 114–134 (LLGLAMLQFTNSFFIFISAFI), 167–187 (FFLMLVYYVTYLAILYFAVIL), 209–229 (ASISFNLLSLAGLPPFLGFFI), 242–262 (LLVLALVVSSCFSVYFYFSIA), and 276–296 (KMEIPGILSMGFNIFLPLFFL).

Belongs to the complex I subunit 2 family.

It is found in the mitochondrion inner membrane. The catalysed reaction is a ubiquinone + NADH + 5 H(+)(in) = a ubiquinol + NAD(+) + 4 H(+)(out). Functionally, core subunit of the mitochondrial membrane respiratory chain NADH dehydrogenase (Complex I) that is believed to belong to the minimal assembly required for catalysis. Complex I functions in the transfer of electrons from NADH to the respiratory chain. The immediate electron acceptor for the enzyme is believed to be ubiquinone. The polypeptide is NADH-ubiquinone oxidoreductase chain 2 (ND2) (Artemia franciscana (Brine shrimp)).